The chain runs to 326 residues: tRNA-modifying protein YgfZ (326 aa).

Folate contacts are provided by tryptophan 27 and tryptophan 189.

Belongs to the tRNA-modifying YgfZ family.

The protein resides in the cytoplasm. Folate-binding protein involved in regulating the level of ATP-DnaA and in the modification of some tRNAs. It is probably a key factor in regulatory networks that act via tRNA modification, such as initiation of chromosomal replication. This chain is tRNA-modifying protein YgfZ, found in Escherichia coli O157:H7 (strain EC4115 / EHEC).